We begin with the raw amino-acid sequence, 271 residues long: uncharacterized protein (271 aa).

Solcar repeat units lie at residues Val3–Arg74, Glu81–Tyr163, and Asp171–Lys268. A run of 6 helical transmembrane segments spans residues Thr5–Ile26, Gly49–Val69, Ile84–Leu104, Gly138–Glu158, Trp170–Ile190, and Phe240–Val261.

Belongs to the mitochondrial carrier (TC 2.A.29) family.

The protein localises to the mitochondrion inner membrane. This is an uncharacterized protein from Schizosaccharomyces pombe (strain 972 / ATCC 24843) (Fission yeast).